The primary structure comprises 586 residues: MSQMLHIEIPNFGNTVLGCLNEQRLLGLYCDVSIVVKGQAFKAHRAVLAASSLYFRDLFSGNSKSAFELPGTVPPACFQQILSFCYTGKLTMAASEQLVVMYTAGFLQIQHIVERGTDLMFKVSSPHCDSQTAMIEDASSEPQSPCNQLQPATAAYVTSPSVPIPLLTRVKHEAMEMPPASGPGLASKRPLETGPRDGVAVATGAAGTPGTAPLKLPRVSYYGVPSLATLIPSIQQVPYPPGERTSPGASSLPTTDSPTSYHNEEDEEDDEAYDTMVEEQYGQMYIKATGNYAVQEKPEPVPLESRSCVLIRRDLVALPASLISQIGYRCHPKLYSEGDPGEKLELVAGSGVYITRGQLMNCHLCAGVKHKVLLRRLLATFFDRNTLANSCGTGIRSSTSDPSRKPLDSRVLNAVKLYCQNFAPSFKESEMNVIAADMCTNARRVRKRWLPKIKSMLPEGVEMYRSVMGASAASLPLDPEFPSAAPQVFEQRIYAERRSDAATIVALRTDAVNVDLSTSANPAFEANEEVDGGGSVIQEVAAPEQLPADGQSSPQAFEQGNTSSSRPQTPVATATRRPEGTYAGTL.

One can recognise a BTB domain in the interval 30–94; that stretch reads CDVSIVVKGQ…CYTGKLTMAA (65 aa). A Glycyl lysine isopeptide (Lys-Gly) (interchain with G-Cter in SUMO2) cross-link involves residue Lys-171. Positions 177-196 are disordered; that stretch reads MPPASGPGLASKRPLETGPR. Lys-215 participates in a covalent cross-link: Glycyl lysine isopeptide (Lys-Gly) (interchain with G-Cter in SUMO2). A disordered region spans residues 236-272; the sequence is QVPYPPGERTSPGASSLPTTDSPTSYHNEEDEEDDEA. The segment covering 247-261 has biased composition (polar residues); that stretch reads PGASSLPTTDSPTSY. Residues Lys-297, Lys-427, and Lys-454 each participate in a glycyl lysine isopeptide (Lys-Gly) (interchain with G-Cter in SUMO2) cross-link. Residues 349-446 enclose the BEN domain; it reads GSGVYITRGQ…DMCTNARRVR (98 aa). The interval 542–586 is disordered; sequence APEQLPADGQSSPQAFEQGNTSSSRPQTPVATATRRPEGTYAGTL. Residues 550-572 show a composition bias toward polar residues; sequence GQSSPQAFEQGNTSSSRPQTPVA.

In terms of assembly, homooligomer; mediated by the BTB domain. Interacts with the NuRD complex. Interacts (via C-terminal part) with HDAC2. Interacts (via BTB domain) with MTA1, MTA2 and MTA3.

The protein localises to the nucleus. Functionally, functions as a transcriptional repressor through its association with the NuRD complex. Recruits the NuRD complex to the promoter of MDM2, leading to the repression of MDM2 transcription and subsequent stability of p53/TP53. This Mus musculus (Mouse) protein is Nucleus accumbens-associated protein 2 (Nacc2).